A 462-amino-acid polypeptide reads, in one-letter code: uncharacterized protein (462 aa).

The 59-residue stretch at 12-70 (MLKKNDIIQVAISDLSHEGAGVAKHDGFVFFVDNALPEEVIDMRVLKVNKNSGFGKVEA) folds into the TRAM domain. The S-adenosyl-L-methionine site is built by Gln-294, Tyr-323, Glu-344, and Asp-392. Catalysis depends on Cys-419, which acts as the Nucleophile.

Belongs to the class I-like SAM-binding methyltransferase superfamily. RNA M5U methyltransferase family.

This is an uncharacterized protein from Streptococcus pyogenes serotype M3 (strain ATCC BAA-595 / MGAS315).